The sequence spans 472 residues: Chitobiosyldiphosphodolichol beta-mannosyltransferase (472 aa).

Over 1 to 20 (MEEFQFIKYKGFDHVFKYSG) the chain is Lumenal. The helical transmembrane segment at 21–41 (PWLWWLVGFYLCLPILAYTLL) threads the bilayer. Topologically, residues 42–118 (PYLTMNGTIS…PITVTKNTSN (77 aa)) are cytoplasmic. Positions 119–139 (LPFILFAAKKMVVQFFQLLKL) form an intramembrane region, helical. At 140-472 (LSDFRGTDYV…MGKRFEYSTD (333 aa)) the chain is on the cytoplasmic side.

The protein belongs to the glycosyltransferase group 1 family.

It localises to the endoplasmic reticulum membrane. It carries out the reaction an N,N'-diacetylchitobiosyl-diphospho-di-trans,poly-cis-dolichol + GDP-alpha-D-mannose = a beta-D-Man-(1-&gt;4)-beta-D-GlcNAc-(1-&gt;4)-alpha-D-GlcNAc-diphospho-di-trans,poly-cis-dolichol + GDP + H(+). The protein operates within protein modification; protein glycosylation. Functionally, participates in the formation of the lipid-linked precursor oligosaccharide for N-glycosylation. Involved in assembling the dolichol-pyrophosphate-GlcNAc(2)-Man(5) intermediate on the cytoplasmic surface of the ER. This Debaryomyces hansenii (strain ATCC 36239 / CBS 767 / BCRC 21394 / JCM 1990 / NBRC 0083 / IGC 2968) (Yeast) protein is Chitobiosyldiphosphodolichol beta-mannosyltransferase (ALG1).